The sequence spans 288 residues: Bifunctional protein FolD 2 (288 aa).

Residues 166–168 (GRS) and Ser191 contribute to the NADP(+) site.

This sequence belongs to the tetrahydrofolate dehydrogenase/cyclohydrolase family. As to quaternary structure, homodimer.

The catalysed reaction is (6R)-5,10-methylene-5,6,7,8-tetrahydrofolate + NADP(+) = (6R)-5,10-methenyltetrahydrofolate + NADPH. It carries out the reaction (6R)-5,10-methenyltetrahydrofolate + H2O = (6R)-10-formyltetrahydrofolate + H(+). The protein operates within one-carbon metabolism; tetrahydrofolate interconversion. Its function is as follows. Catalyzes the oxidation of 5,10-methylenetetrahydrofolate to 5,10-methenyltetrahydrofolate and then the hydrolysis of 5,10-methenyltetrahydrofolate to 10-formyltetrahydrofolate. The sequence is that of Bifunctional protein FolD 2 from Frankia casuarinae (strain DSM 45818 / CECT 9043 / HFP020203 / CcI3).